Consider the following 320-residue polypeptide: ATP-dependent 6-phosphofructokinase (320 aa).

Glycine 12 lines the ATP pocket. ADP-binding positions include 22-26 (RGVVR) and 55-60 (RYSVSD). ATP is bound by residues 73-74 (RF) and 103-106 (GDGS). Residue aspartate 104 coordinates Mg(2+). 126–128 (TID) contacts substrate. The active-site Proton acceptor is aspartate 128. Arginine 155 contacts ADP. Substrate contacts are provided by residues arginine 163 and 170 to 172 (MGR). ADP is bound by residues 186–188 (GCE), lysine 212, and 214–216 (KKH). Substrate contacts are provided by residues glutamate 223, arginine 244, and 250–253 (HIQR).

Belongs to the phosphofructokinase type A (PFKA) family. ATP-dependent PFK group I subfamily. Prokaryotic clade 'B1' sub-subfamily. Homotetramer. Mg(2+) is required as a cofactor.

It localises to the cytoplasm. It catalyses the reaction beta-D-fructose 6-phosphate + ATP = beta-D-fructose 1,6-bisphosphate + ADP + H(+). The protein operates within carbohydrate degradation; glycolysis; D-glyceraldehyde 3-phosphate and glycerone phosphate from D-glucose: step 3/4. Allosterically activated by ADP and other diphosphonucleosides, and allosterically inhibited by phosphoenolpyruvate. In terms of biological role, catalyzes the phosphorylation of D-fructose 6-phosphate to fructose 1,6-bisphosphate by ATP, the first committing step of glycolysis. This chain is ATP-dependent 6-phosphofructokinase, found in Escherichia fergusonii (strain ATCC 35469 / DSM 13698 / CCUG 18766 / IAM 14443 / JCM 21226 / LMG 7866 / NBRC 102419 / NCTC 12128 / CDC 0568-73).